Consider the following 314-residue polypeptide: tRNA dimethylallyltransferase (314 aa).

10 to 17 serves as a coordination point for ATP; it reads GPTAVGKT. 12–17 serves as a coordination point for substrate; sequence TAVGKT. Interaction with substrate tRNA regions lie at residues 35-38, 160-164, 239-244, and 272-279; these read DSMQ, RRVIR, QAIGYK, and KRQLTWFR.

Belongs to the IPP transferase family. Monomer. Mg(2+) serves as cofactor.

The catalysed reaction is adenosine(37) in tRNA + dimethylallyl diphosphate = N(6)-dimethylallyladenosine(37) in tRNA + diphosphate. Functionally, catalyzes the transfer of a dimethylallyl group onto the adenine at position 37 in tRNAs that read codons beginning with uridine, leading to the formation of N6-(dimethylallyl)adenosine (i(6)A). This chain is tRNA dimethylallyltransferase (miaA), found in Halalkalibacterium halodurans (strain ATCC BAA-125 / DSM 18197 / FERM 7344 / JCM 9153 / C-125) (Bacillus halodurans).